The chain runs to 272 residues: Putative pyruvate, phosphate dikinase regulatory protein (272 aa).

An ADP-binding site is contributed by 151–158 (GISRTSKT).

The protein belongs to the pyruvate, phosphate/water dikinase regulatory protein family. PDRP subfamily.

The enzyme catalyses N(tele)-phospho-L-histidyl/L-threonyl-[pyruvate, phosphate dikinase] + ADP = N(tele)-phospho-L-histidyl/O-phospho-L-threonyl-[pyruvate, phosphate dikinase] + AMP + H(+). It catalyses the reaction N(tele)-phospho-L-histidyl/O-phospho-L-threonyl-[pyruvate, phosphate dikinase] + phosphate + H(+) = N(tele)-phospho-L-histidyl/L-threonyl-[pyruvate, phosphate dikinase] + diphosphate. Functionally, bifunctional serine/threonine kinase and phosphorylase involved in the regulation of the pyruvate, phosphate dikinase (PPDK) by catalyzing its phosphorylation/dephosphorylation. The sequence is that of Putative pyruvate, phosphate dikinase regulatory protein from Staphylococcus aureus (strain USA300).